The chain runs to 305 residues: Oxidoreductase swnR (305 aa).

It belongs to the NmrA-type oxidoreductase family. Isoflavone reductase subfamily.

It carries out the reaction L-pipecolate + O2 = L-1-piperideine-6-carboxylate + H2O2 + H(+). Its pathway is mycotoxin biosynthesis. Functionally, oxidoreductase; part of the gene cluster that mediates the biosynthesis of swainsonine (SW), a cytotoxic fungal alkaloid and a potential cancer therapy drug. Swainsonine production occurs via a multibranched pathway and is dispensable for fungal colonization of plants and infection of insect hosts. The first step of swainsonine biosynthesis is the production of the precursor pipecolic acid (PA) via conversion of L-lysine (Lys) to 1-piperideine-6-carboxylate (P6C) by the aminotransferase swnA, the latter being further reduced to PA by the reductase swnR. PA can be converted from lysine by both the SW biosynthetic cluster and the unclustered genes such as lysine cyclodeaminase. The PKS-NRPS hybrid synthetase swnK uptakes and condensates PA and malonyl-CoA with and without skipping of the ketoreductase (KR) domain in order to produce 3 intermediates, 1-oxoindolizidine, (1S)-1-hydroxyindolizin, and (1R)-1-hydroxyindolizine; with the transisomer (1S)-1-hydroxyindolizin being predominant. The terminal thioester reductase (TE) domain of swnK is involved in reduction of the thioester bond to release the intermediate aldehydes. The oxidoreductase swnN could contribute to the reduction of 1-oxoindolizidine to (1S)-1-hydroxyindolizin and (1R)-1-hydroxyindolizine, contributing to the major route of SW production. The dioxygenase swnH2 would be responsible for the oxidization of (1R)-1-hydroxyindolizine into (1R,2S)-1,2-dihydroxyindolizine and of (1S)-1-hydroxyindolizin to yield both (1R,2S)-1,2-dihydroxyindolizine and (1S,2S)-1,2-dihydroxyindolizine. The dioxygenase swnH1 then performs the conversion of the 1,2-dihydroxyindolizine epimers to SW. The sequence is that of Oxidoreductase swnR from Metarhizium robertsii (strain ARSEF 23 / ATCC MYA-3075) (Metarhizium anisopliae (strain ARSEF 23)).